A 232-amino-acid chain; its full sequence is 7-cyano-7-deazaguanine synthase 1 (232 aa).

An ATP-binding site is contributed by 7 to 17 (CSGGLDSVSLA). Positions 185, 193, 196, and 199 each coordinate Zn(2+).

This sequence belongs to the QueC family. Zn(2+) is required as a cofactor.

It catalyses the reaction 7-carboxy-7-deazaguanine + NH4(+) + ATP = 7-cyano-7-deazaguanine + ADP + phosphate + H2O + H(+). Its pathway is purine metabolism; 7-cyano-7-deazaguanine biosynthesis. Functionally, catalyzes the ATP-dependent conversion of 7-carboxy-7-deazaguanine (CDG) to 7-cyano-7-deazaguanine (preQ(0)). The sequence is that of 7-cyano-7-deazaguanine synthase 1 from Mesorhizobium japonicum (strain LMG 29417 / CECT 9101 / MAFF 303099) (Mesorhizobium loti (strain MAFF 303099)).